A 188-amino-acid chain; its full sequence is PRA1 family protein 3 (188 aa).

M1 bears the N-acetylmethionine mark. The Cytoplasmic portion of the chain corresponds to 1-35 (MDVNIAPLRAWDDFFPGSDRFAQPDFRDISKWNNR). Helical transmembrane passes span 36 to 56 (VVSN…MMIS) and 57 to 77 (VVGF…VLVF). Residues 78–93 (TGFVWAAHNKDALRRL) lie on the Cytoplasmic side of the membrane. The next 2 membrane-spanning stretches (helical) occupy residues 94-114 (KKRY…FLIS) and 115-135 (MFGG…LMFI). A required for homodimer formation and heterodimer formation with ARL6IP1 region spans residues 103–117 (MVVMLASYFLISMFG). Topologically, residues 136–188 (HASLRLRNLKNKLENKMEGIGLKRTPMGIVLDALEQQEEGINRLTDYISKVKE) are cytoplasmic. The interval 136–188 (HASLRLRNLKNKLENKMEGIGLKRTPMGIVLDALEQQEEGINRLTDYISKVKE) is targeting to endoplasmic reticulum membrane.

This sequence belongs to the PRA1 family. Homodimer. Heterodimer with ARL6IP1. Forms multimers. Interacts with ARL6. Interacts with prenylated RAB1A and RAB3A. Interacts with SLC1A1/EAAC1. Interacts with RTN2 (via first transmembrane domain). Does not interact with VAMP1, VAMP2 or VAMP3.

Its subcellular location is the endoplasmic reticulum membrane. The protein localises to the cell membrane. It is found in the cytoplasm. It localises to the cytoskeleton. In terms of biological role, regulates intracellular concentrations of taurine and glutamate. Negatively modulates SLC1A1/EAAC1 glutamate transport activity by decreasing its affinity for glutamate in a PKC activity-dependent manner. Plays a role in the retention of SLC1A1/EAAC1 in the endoplasmic reticulum. This is PRA1 family protein 3 (ARL6IP5) from Macaca fascicularis (Crab-eating macaque).